Reading from the N-terminus, the 199-residue chain is Recombination protein RecR (199 aa).

A C4-type zinc finger spans residues 57–72; it reads CQQCRTFTEQNLCAIC. A Toprim domain is found at 81–176; that stretch reads GMICVVEMPV…KVSRIAHGVP (96 aa).

It belongs to the RecR family.

Its function is as follows. May play a role in DNA repair. It seems to be involved in an RecBC-independent recombinational process of DNA repair. It may act with RecF and RecO. The sequence is that of Recombination protein RecR from Psychromonas ingrahamii (strain DSM 17664 / CCUG 51855 / 37).